The chain runs to 71 residues: Small ribosomal subunit protein bS21 (71 aa).

It belongs to the bacterial ribosomal protein bS21 family.

This Photobacterium profundum (strain SS9) protein is Small ribosomal subunit protein bS21.